The chain runs to 403 residues: MACPYLGSGELTHRVTFMEGGEECQQGVNKVEMGFGQTYSEYLQLDKILTAQRLKSEADGQRVDDEHLFIVIHQAHELWFKQIIFDLDNVRKLLNNTIVDETKTLKIVSGLDRMTKILSLLTEQITLLDTMSPLDFVDFRKYLTPASGFQSLQFRVLENKLGVRQERRIKYNAQHYKNVFNDTDLKTLNVTEEEKSLLTLIESWLERTPGLKSTSEDEGFWIKYEKSVNKYLADLAKQAADPSNTEEIAKQLTAEYHKTADAFQSILDPRQHEQHIRNGNRLLSHDATKGAMMIYFYRDMPRFSQPYQILTFLMDIDSLFTKWRYNHVLLVQRMLGAKQGTGGSSGYMYLRSTVSDRYKVFLDLFNLSTWLIPREYIPMLSPRMVKTLSEHSNLSHSQSSESD.

Residue 69 to 73 participates in substrate binding; sequence FIVIH. Residues 133–135 carry the PLD motif; required for enzymatic activity motif; that stretch reads PLD. Arginine 140 is a binding site for substrate. A heme-binding site is contributed by histidine 327. Threonine 341 is a binding site for substrate.

The protein belongs to the tryptophan 2,3-dioxygenase family. In terms of assembly, homotetramer. Dimer of dimers. Heme is required as a cofactor. Expressed in body wall muscle cells, hypodermis, PLM neurons and touch-receptor neurons.

It carries out the reaction L-tryptophan + O2 = N-formyl-L-kynurenine. Its pathway is amino-acid degradation; L-tryptophan degradation via kynurenine pathway; L-kynurenine from L-tryptophan: step 1/2. Heme-dependent dioxygenase that catalyzes the oxidative cleavage of the L-tryptophan (L-Trp) pyrrole ring and converts L-tryptophan to N-formyl-L-kynurenine. Catalyzes the oxidative cleavage of the indole moiety. Involved in regulation of protein homeostasis, longevity and reproducive life span. Specifically regulates proteotoxicity due to age-related aggregation of proteins like alpha-synuclein, via its effects on tryptophan metabolism. The sequence is that of Tryptophan 2,3-dioxygenase from Caenorhabditis elegans.